The chain runs to 454 residues: Uridine kinase (454 aa).

28-35 (GPSGSGKT) contributes to the ATP binding site.

This sequence belongs to the uridine kinase family.

The protein localises to the cytoplasm. Its subcellular location is the nucleus. The catalysed reaction is uridine + ATP = UMP + ADP + H(+). The enzyme catalyses cytidine + ATP = CMP + ADP + H(+). Its pathway is pyrimidine metabolism; CTP biosynthesis via salvage pathway; CTP from cytidine: step 1/3. It participates in pyrimidine metabolism; UMP biosynthesis via salvage pathway; UMP from uridine: step 1/1. Functionally, catalyzes the conversion of uridine into UMP and cytidine into CMP in the pyrimidine salvage pathway. The polypeptide is Uridine kinase (urk1) (Schizosaccharomyces pombe (strain 972 / ATCC 24843) (Fission yeast)).